A 375-amino-acid polypeptide reads, in one-letter code: Alcohol dehydrogenase 1 (375 aa).

S2 is subject to N-acetylserine. Positions 47, 68, 98, 101, 104, 112, and 175 each coordinate Zn(2+). NAD(+)-binding positions include 200–205, D224, K229, 293–295, and R370; these read GLGGVG and LGV.

It belongs to the zinc-containing alcohol dehydrogenase family. Class-I subfamily. Homodimer. It depends on Zn(2+) as a cofactor.

The protein localises to the cytoplasm. The catalysed reaction is a primary alcohol + NAD(+) = an aldehyde + NADH + H(+). It catalyses the reaction a secondary alcohol + NAD(+) = a ketone + NADH + H(+). The chain is Alcohol dehydrogenase 1 (ADH1) from Apteryx australis (Southern brown kiwi).